Here is a 288-residue protein sequence, read N- to C-terminus: Diaminopimelate epimerase (288 aa).

Residues Asn14 and Asn67 each contribute to the substrate site. Cys76 (proton donor) is an active-site residue. Residues 77 to 78, Asn166, Asn199, and 217 to 218 contribute to the substrate site; these read GN and ER. Residue Cys226 is the Proton acceptor of the active site. 227–228 is a substrate binding site; that stretch reads GT.

The protein belongs to the diaminopimelate epimerase family. Homodimer.

It localises to the cytoplasm. The catalysed reaction is (2S,6S)-2,6-diaminopimelate = meso-2,6-diaminopimelate. It participates in amino-acid biosynthesis; L-lysine biosynthesis via DAP pathway; DL-2,6-diaminopimelate from LL-2,6-diaminopimelate: step 1/1. Functionally, catalyzes the stereoinversion of LL-2,6-diaminopimelate (L,L-DAP) to meso-diaminopimelate (meso-DAP), a precursor of L-lysine and an essential component of the bacterial peptidoglycan. This is Diaminopimelate epimerase from Bacillus thuringiensis (strain Al Hakam).